Here is a 284-residue protein sequence, read N- to C-terminus: Diaminopimelate epimerase (284 aa).

2 residues coordinate substrate: Asn14 and Asn67. The active-site Proton donor is Cys76. Residues Gly77–Asn78, Asn166, Asn199, and Glu217–Arg218 each bind substrate. Cys226 (proton acceptor) is an active-site residue. Residue Gly227–Thr228 coordinates substrate.

The protein belongs to the diaminopimelate epimerase family. Homodimer.

The protein resides in the cytoplasm. The catalysed reaction is (2S,6S)-2,6-diaminopimelate = meso-2,6-diaminopimelate. It functions in the pathway amino-acid biosynthesis; L-lysine biosynthesis via DAP pathway; DL-2,6-diaminopimelate from LL-2,6-diaminopimelate: step 1/1. In terms of biological role, catalyzes the stereoinversion of LL-2,6-diaminopimelate (L,L-DAP) to meso-diaminopimelate (meso-DAP), a precursor of L-lysine and an essential component of the bacterial peptidoglycan. This is Diaminopimelate epimerase from Geobacillus sp. (strain WCH70).